The sequence spans 425 residues: CAAX prenyl protease 1 homolog (425 aa).

A run of 5 helical transmembrane segments spans residues 3-23, 62-80, 109-129, 155-175, and 188-208; these read LPYL…ETYL, FHFI…ILYY, LAFL…FSLY, GILL…IIVQ, and FMFA…APLF. His-284 contributes to the Zn(2+) binding site. The active site involves Glu-285. Zn(2+) is bound at residue His-288. 2 consecutive transmembrane segments (helical) span residues 295–315 and 332–352; these read VYSF…YTLV and VIIG…LLSF. Glu-362 is a Zn(2+) binding site. The Proton donor role is filled by Asp-366.

It belongs to the peptidase M48A family. Zn(2+) is required as a cofactor.

The protein resides in the endoplasmic reticulum membrane. The catalysed reaction is Hydrolyzes the peptide bond -P2-(S-farnesyl or geranylgeranyl)C-P1'-P2'-P3'-COOH where P1' and P2' are amino acids with aliphatic side chains and P3' is any C-terminal residue.. In terms of biological role, proteolytically removes the C-terminal three residues of farnesylated proteins. The chain is CAAX prenyl protease 1 homolog (FACE1) from Oryza sativa subsp. japonica (Rice).